Consider the following 239-residue polypeptide: Large ribosomal subunit protein uL2 (239 aa).

2 disordered regions span residues 1-28 (MGKRILPQRMGRGTPTFRSPSHRRVGPA) and 199-239 (SHPH…RRKG). Positions 225-239 (KVGHIAARRTGRRKG) are enriched in basic residues.

This sequence belongs to the universal ribosomal protein uL2 family. Part of the 50S ribosomal subunit. Forms a bridge to the 30S subunit in the 70S ribosome.

In terms of biological role, one of the primary rRNA binding proteins. Required for association of the 30S and 50S subunits to form the 70S ribosome, for tRNA binding and peptide bond formation. It has been suggested to have peptidyltransferase activity; this is somewhat controversial. Makes several contacts with the 16S rRNA in the 70S ribosome. This is Large ribosomal subunit protein uL2 from Staphylothermus marinus (strain ATCC 43588 / DSM 3639 / JCM 9404 / F1).